A 216-amino-acid chain; its full sequence is Urease accessory protein UreG (216 aa).

A GTP-binding site is contributed by 24–31; it reads GPVGSGKT.

This sequence belongs to the SIMIBI class G3E GTPase family. UreG subfamily. In terms of assembly, homodimer. UreD, UreF and UreG form a complex that acts as a GTP-hydrolysis-dependent molecular chaperone, activating the urease apoprotein by helping to assemble the nickel containing metallocenter of UreC. The UreE protein probably delivers the nickel.

It localises to the cytoplasm. Its function is as follows. Facilitates the functional incorporation of the urease nickel metallocenter. This process requires GTP hydrolysis, probably effectuated by UreG. This chain is Urease accessory protein UreG, found in Variovorax paradoxus (strain S110).